The chain runs to 768 residues: MTETTALASSTVSSAPLSLDLIITCADGLEAPLQTELTSFGIASEMKSTGRLAVTGTLRDLYKICLWSRVASRVLMLIKRKNINAEYDVAEQLYGLAKSVNWTEQFSLEQTFAIRLSVDKRVAVSQQFAMLRIKDAIADTFNEVYESRPNVDSKNPDFSIFATVNDKQAELYLDLSGTSLHRRGYRVAMTEAPLKENLAAALLYSAGWHQKNEAGDAPFYNALIDPMCGSGTFIIEALLMHCDYAVGIDKAANQFGFYEWQHHDAALWQEMIDDAQTRFRAALEIANEQPDTLPLIFGFDADNGAIIATEKNLIAAGLQDLLPLLDIETRALDQLSTLLKPLVADGRLSNPLIITNPPYGERLGDEEMIKPLYQSIGLILQDSFAGSGVDPMLGILASHVEQVDILPIREPKTLRCHNGAITVYFRYGTLIAGQTGNLVNRFEKREIEVEDGQDFINRLQKNLTRLKKLAKKDNVSNIRVYNADLPDFKVAIDLYGDYAHVQEYAPPKTIPPETAKKRFNLALMGIREVFGINREQIFIKTRARQSGNDQYSKQGNTEKRGKFYIAREDGAYLYVNFTDYLDTGLFIDHRNMRARIKDNSRNKSVLNLFAYTCTASVHAALAGAKKVTSVDLSQNYLDWGKQNFALNGLNVSGNKYQFVAADIFEWIKDNTEQFDIIFIDPPTFSNSKKFQGTFDVQRDHAALINRAMNRLTADGILYFSNNFTRFELDEQLTERYDIVDITQKTIGFDFDIKKPIHQSFEIRHRQSI.

Residues Asp60–Leu175 form the THUMP domain.

The protein belongs to the methyltransferase superfamily. RlmKL family.

The protein resides in the cytoplasm. It carries out the reaction guanosine(2445) in 23S rRNA + S-adenosyl-L-methionine = N(2)-methylguanosine(2445) in 23S rRNA + S-adenosyl-L-homocysteine + H(+). The catalysed reaction is guanosine(2069) in 23S rRNA + S-adenosyl-L-methionine = N(2)-methylguanosine(2069) in 23S rRNA + S-adenosyl-L-homocysteine + H(+). In terms of biological role, specifically methylates the guanine in position 2445 (m2G2445) and the guanine in position 2069 (m7G2069) of 23S rRNA. This chain is Ribosomal RNA large subunit methyltransferase K/L, found in Psychrobacter arcticus (strain DSM 17307 / VKM B-2377 / 273-4).